A 333-amino-acid chain; its full sequence is Lipoyl synthase (333 aa).

The [4Fe-4S] cluster site is built by C56, C61, C67, C82, C86, C89, and S293. The 215-residue stretch at 68–282 (WEDREATFLI…GRVGAELGFS (215 aa)) folds into the Radical SAM core domain. The disordered stretch occupies residues 301–333 (QQAMTARDQDRSEMSVPPESVSENSHGQRPSPW). Low complexity predominate over residues 314–325 (MSVPPESVSENS).

Belongs to the radical SAM superfamily. Lipoyl synthase family. [4Fe-4S] cluster serves as cofactor.

Its subcellular location is the cytoplasm. It carries out the reaction [[Fe-S] cluster scaffold protein carrying a second [4Fe-4S](2+) cluster] + N(6)-octanoyl-L-lysyl-[protein] + 2 oxidized [2Fe-2S]-[ferredoxin] + 2 S-adenosyl-L-methionine + 4 H(+) = [[Fe-S] cluster scaffold protein] + N(6)-[(R)-dihydrolipoyl]-L-lysyl-[protein] + 4 Fe(3+) + 2 hydrogen sulfide + 2 5'-deoxyadenosine + 2 L-methionine + 2 reduced [2Fe-2S]-[ferredoxin]. It functions in the pathway protein modification; protein lipoylation via endogenous pathway; protein N(6)-(lipoyl)lysine from octanoyl-[acyl-carrier-protein]: step 2/2. In terms of biological role, catalyzes the radical-mediated insertion of two sulfur atoms into the C-6 and C-8 positions of the octanoyl moiety bound to the lipoyl domains of lipoate-dependent enzymes, thereby converting the octanoylated domains into lipoylated derivatives. The sequence is that of Lipoyl synthase from Frankia casuarinae (strain DSM 45818 / CECT 9043 / HFP020203 / CcI3).